The chain runs to 219 residues: Non-specific lipid transfer protein GPI-anchored 25 (219 aa).

The N-terminal stretch at 1-22 (MATKITGVFILILTITFSSSSA) is a signal peptide. 4 cysteine pairs are disulfide-bonded: Cys-39–Cys-85, Cys-49–Cys-68, Cys-69–Cys-110, and Cys-83–Cys-123. Residue Asn-59 is glycosylated (N-linked (GlcNAc...) asparagine). A glycan (N-linked (GlcNAc...) asparagine) is linked at Asn-148. Positions 152-181 (SPQSVDLAPEVSPSSDLFSPETATLAPPPP) are disordered. Ser-192 carries the GPI-anchor amidated serine lipid modification. Positions 193 to 219 (SDSLKIRNFWFPSTIIMTFATSILARI) are cleaved as a propeptide — removed in mature form.

It belongs to the plant LTP family.

It is found in the cell membrane. Its function is as follows. Probable lipid transfer protein. This chain is Non-specific lipid transfer protein GPI-anchored 25, found in Arabidopsis thaliana (Mouse-ear cress).